Reading from the N-terminus, the 73-residue chain is Translation initiation factor IF-1 2 (73 aa).

Residues 1-72 (MAKEELVEFG…TKGRINYRHK (72 aa)) enclose the S1-like domain.

The protein belongs to the IF-1 family. As to quaternary structure, component of the 30S ribosomal translation pre-initiation complex which assembles on the 30S ribosome in the order IF-2 and IF-3, IF-1 and N-formylmethionyl-tRNA(fMet); mRNA recruitment can occur at any time during PIC assembly.

It localises to the cytoplasm. Functionally, one of the essential components for the initiation of protein synthesis. Stabilizes the binding of IF-2 and IF-3 on the 30S subunit to which N-formylmethionyl-tRNA(fMet) subsequently binds. Helps modulate mRNA selection, yielding the 30S pre-initiation complex (PIC). Upon addition of the 50S ribosomal subunit IF-1, IF-2 and IF-3 are released leaving the mature 70S translation initiation complex. The chain is Translation initiation factor IF-1 2 from Cupriavidus pinatubonensis (strain JMP 134 / LMG 1197) (Cupriavidus necator (strain JMP 134)).